Here is a 211-residue protein sequence, read N- to C-terminus: Uridine kinase (211 aa).

An ATP-binding site is contributed by 13–20; that stretch reads GGSGSGKT.

It belongs to the uridine kinase family.

It localises to the cytoplasm. It catalyses the reaction uridine + ATP = UMP + ADP + H(+). It carries out the reaction cytidine + ATP = CMP + ADP + H(+). Its pathway is pyrimidine metabolism; CTP biosynthesis via salvage pathway; CTP from cytidine: step 1/3. It functions in the pathway pyrimidine metabolism; UMP biosynthesis via salvage pathway; UMP from uridine: step 1/1. The chain is Uridine kinase from Lactobacillus johnsonii (strain CNCM I-12250 / La1 / NCC 533).